A 909-amino-acid chain; its full sequence is Protein translocase subunit SecA (909 aa).

ATP contacts are provided by residues glutamine 87, 105–109 (GEGKT), and aspartate 514. A disordered region spans residues 879 to 909 (TPVQGGPKVGRNDPCPCGSGKKYKHCHGKLS). Cysteine 893, cysteine 895, cysteine 904, and histidine 905 together coordinate Zn(2+). The span at 899 to 909 (KKYKHCHGKLS) shows a compositional bias: basic residues.

Belongs to the SecA family. Monomer and homodimer. Part of the essential Sec protein translocation apparatus which comprises SecA, SecYEG and auxiliary proteins SecDF-YajC and YidC. Requires Zn(2+) as cofactor.

It is found in the cell inner membrane. It localises to the cytoplasm. The catalysed reaction is ATP + H2O + cellular proteinSide 1 = ADP + phosphate + cellular proteinSide 2.. Its function is as follows. Part of the Sec protein translocase complex. Interacts with the SecYEG preprotein conducting channel. Has a central role in coupling the hydrolysis of ATP to the transfer of proteins into and across the cell membrane, serving both as a receptor for the preprotein-SecB complex and as an ATP-driven molecular motor driving the stepwise translocation of polypeptide chains across the membrane. In Azoarcus sp. (strain BH72), this protein is Protein translocase subunit SecA.